The primary structure comprises 380 residues: Cytochrome b (380 aa).

A run of 4 helical transmembrane segments spans residues 34–54 (FGSL…LLAA), 78–99 (WLIR…YMHV), 114–134 (WNTG…GYVL), and 179–199 (FFTL…IHLT). H84 and H98 together coordinate heme b. Heme b is bound by residues H183 and H197. A ubiquinone is bound at residue H202. The next 4 helical transmembrane spans lie at 227–247 (LKDI…ALFS), 289–309 (LGGV…PLLH), 321–341 (LSQL…WVGS), and 348–368 (FMII…ILFP).

This sequence belongs to the cytochrome b family. As to quaternary structure, the cytochrome bc1 complex contains 11 subunits: 3 respiratory subunits (MT-CYB, CYC1 and UQCRFS1), 2 core proteins (UQCRC1 and UQCRC2) and 6 low-molecular weight proteins (UQCRH/QCR6, UQCRB/QCR7, UQCRQ/QCR8, UQCR10/QCR9, UQCR11/QCR10 and a cleavage product of UQCRFS1). This cytochrome bc1 complex then forms a dimer. Heme b serves as cofactor.

It localises to the mitochondrion inner membrane. In terms of biological role, component of the ubiquinol-cytochrome c reductase complex (complex III or cytochrome b-c1 complex) that is part of the mitochondrial respiratory chain. The b-c1 complex mediates electron transfer from ubiquinol to cytochrome c. Contributes to the generation of a proton gradient across the mitochondrial membrane that is then used for ATP synthesis. The chain is Cytochrome b (MT-CYB) from Balearica pavonina (Black crowned-crane).